The chain runs to 151 residues: Small ribosomal subunit protein uS15z (151 aa).

The protein belongs to the universal ribosomal protein uS15 family.

This Oryza sativa subsp. japonica (Rice) protein is Small ribosomal subunit protein uS15z.